The sequence spans 1005 residues: Mitogen-activated protein kinase kinase kinase 10 (1005 aa).

One can recognise an SH3 domain in the interval 32–96 (VSNPLWMAVF…PSNYVVSDDK (65 aa)). The Protein kinase domain maps to 118–380 (LNLDEIIGVG…SCILEQLTTI (263 aa)). Residues 124–132 (IGVGGFGKV) and Lys145 contribute to the ATP site. The active-site Proton acceptor is the Asp242. Leucine-zipper stretches follow at residues 404–425 (IQQM…EEEL) and 439–460 (LKRR…ELNI). Disordered stretches follow at residues 551-611 (SVLK…KHTP), 647-676 (QSDH…QSRR), 712-736 (FQWA…GEDS), and 758-940 (RSLI…AEGA). Basic and acidic residues-rich tracts occupy residues 576 to 588 (QKER…RLKT) and 648 to 658 (SDHRSHPEDTA). Basic and acidic residues-rich tracts occupy residues 761–786 (IRSD…EDRG) and 799–809 (YKVESFKRDPK). Positions 810–826 (QSLTPTHVTVGRNNTTE) are enriched in polar residues. A compositionally biased stretch (pro residues) spans 862–879 (EPSPFPRLPDPHFVFPPP). Low complexity predominate over residues 915 to 940 (SLSQTHSSSPSSGGGDACSSGSAEGA).

The protein belongs to the protein kinase superfamily. STE Ser/Thr protein kinase family. MAP kinase kinase kinase subfamily. In terms of assembly, homodimer. Binds to the GTPase rac1 but not cdc42 or rhoA. Interacts (via kinase domain) with pak1 (via kinase domain). Interacts with the ubiquitin-conjugating enzyme ube2d4. Mg(2+) serves as cofactor. In terms of processing, autophosphorylation on serine and threonine residues within the activation loop plays a role in enzyme activation. Post-translationally, mono- and poly-ubiquitinated. In terms of tissue distribution, in adults, strongly expressed in the brain and spleen with lower levels in pancreas, heart, muscle and kidney (at protein level). In the developing embryo, expressed at stage 22 in the cement gland. Weakly expressed in the pronephros from stage 24 or 25, with expression increasing in strength by stage 30 and continuing at least until stage 37. Expression in the developing pronephros correlates with epithelialization of the proximal pronephric tubules.

The catalysed reaction is L-seryl-[protein] + ATP = O-phospho-L-seryl-[protein] + ADP + H(+). The enzyme catalyses L-threonyl-[protein] + ATP = O-phospho-L-threonyl-[protein] + ADP + H(+). With respect to regulation, homodimerization via the leucine zipper domains is required for autophosphorylation and subsequent activation. In terms of biological role, activates the JUN N-terminal pathway. Essential for pronephros and cement gland development. This is Mitogen-activated protein kinase kinase kinase 10 (map3k10) from Xenopus laevis (African clawed frog).